We begin with the raw amino-acid sequence, 369 residues long: F-box protein UCC1 (369 aa).

An F-box domain is found at 8–45 (LMDLPLEIHLSLLEYVPNELRAVNKYFYVLHNHSYKEK).

As to quaternary structure, component of the SCF(UCC1) E3 ubiquitin-protein ligase complex composed of CDC53, SKP1, RBX1 and UCC1. Interacts with CIT2. In terms of processing, monoubiquitinated by UBC4.

It participates in protein modification; protein ubiquitination. Substrate recognition component of the SKP1-CUL1-F-box protein E3 ubiquitin-protein ligase complex SCF(UCC1) which mediates the ubiquitination and subsequent proteasomal degradation of target proteins. The SCF(UCC1) complex acts as a metabolic switch for the glyoxylate cycle and regulates the level of CIT2 protein to maintain citrate homeostasis. This chain is F-box protein UCC1 (UCC1), found in Saccharomyces cerevisiae (strain ATCC 204508 / S288c) (Baker's yeast).